The chain runs to 601 residues: RNA polymerase II C-terminal domain phosphatase-like 5 (601 aa).

Residues 1–20 form a disordered region; it reads MFVAKNLSPERESKRQKKEP. Positions 8–20 are enriched in basic and acidic residues; that stretch reads SPERESKRQKKEP. FCP1 homology domains follow at residues 84–259 and 381–553; these read LNMK…TDES and LNEK…DESE.

Expressed in roots, seedlings, hypocotyls, cotyledons, leaves, siliques and flowers.

It is found in the nucleus. It carries out the reaction O-phospho-L-seryl-[protein] + H2O = L-seryl-[protein] + phosphate. The catalysed reaction is O-phospho-L-threonyl-[protein] + H2O = L-threonyl-[protein] + phosphate. Its function is as follows. Mediates the dephosphorylation of 'Ser-2' of the heptad repeats YSPTSPS in the C-terminal domain of the largest RNA polymerase II subunit (RPB1). This promotes the activity of RNA polymerase II. Positively regulates abscisic acid (ABA) and drought responses, including the regulation of specific genes expression. This Arabidopsis thaliana (Mouse-ear cress) protein is RNA polymerase II C-terminal domain phosphatase-like 5.